The primary structure comprises 236 residues: uncharacterized protein (236 aa).

This sequence to M.tuberculosis Rv2557.

This is an uncharacterized protein from Mycobacterium tuberculosis (strain CDC 1551 / Oshkosh).